A 268-amino-acid chain; its full sequence is CCAAT/enhancer-binding protein delta (268 aa).

3 disordered regions span residues 1-48 (MSAA…LGST), 97-132 (GLEL…DAPG), and 152-219 (AAQP…NQEM). N-acetylserine is present on Ser-2. Residue Lys-120 forms a Glycyl lysine isopeptide (Lys-Gly) (interchain with G-Cter in SUMO) linkage. Residues 155–167 (PTPPTSPEPPRGS) are compositionally biased toward pro residues. The segment covering 177–201 (VREKGAGKRGPDRGSPEYRQRRERN) has biased composition (basic and acidic residues). The 64-residue stretch at 191–254 (SPEYRQRRER…AGLRQFFKKL (64 aa)) folds into the bZIP domain. The basic motif stretch occupies residues 195 to 222 (RQRRERNNIAVRKSRDKAKRRNQEMQQK). Positions 226–254 (LSAENEKLHQRVEQLTRDLAGLRQFFKKL) are leucine-zipper.

It belongs to the bZIP family. C/EBP subfamily. As to quaternary structure, binds DNA as a homodimer and as a heterodimer. Can form stable heterodimers with CEBPA, CEBPB and CEBPE. Directly interacts with SPI1/PU.1; this interaction does not affect DNA-binding properties of each partner. Interacts with PRDM16.

Its subcellular location is the nucleus. Functionally, transcription activator that recognizes two different DNA motifs: the CCAAT homology common to many promoters and the enhanced core homology common to many enhancers. Important transcription factor regulating the expression of genes involved in immune and inflammatory responses. Transcriptional activator that enhances IL6 transcription alone and as heterodimer with CEBPB. This is CCAAT/enhancer-binding protein delta (Cebpd) from Mus musculus (Mouse).